We begin with the raw amino-acid sequence, 539 residues long: GMP synthase [glutamine-hydrolyzing] (539 aa).

One can recognise a Glutamine amidotransferase type-1 domain in the interval 20–215 (TILILDFGSQ…AIEICHAKPN (196 aa)). Residue Cys-96 is the Nucleophile of the active site. Active-site residues include His-189 and Glu-191. Residues 216–413 (WSMENFVDKE…LGIEHSLVWR (198 aa)) enclose the GMPS ATP-PPase domain. 244-250 (SGGVDST) serves as a coordination point for ATP. Positions 317, 475, 531, and 537 each coordinate XMP.

As to quaternary structure, homodimer. Mg(2+) serves as cofactor.

Its subcellular location is the cytoplasm. It localises to the cytosol. It carries out the reaction XMP + L-glutamine + ATP + H2O = GMP + L-glutamate + AMP + diphosphate + 2 H(+). Its pathway is purine metabolism; GMP biosynthesis; GMP from XMP (L-Gln route): step 1/1. Functionally, catalyzes the conversion of xanthine monophosphate (XMP) to GMP in the presence of glutamine and ATP through an adenyl-XMP intermediate. This is GMP synthase [glutamine-hydrolyzing] from Schizosaccharomyces pombe (strain 972 / ATCC 24843) (Fission yeast).